The chain runs to 120 residues: Large ribosomal subunit protein uL18 (120 aa).

Belongs to the universal ribosomal protein uL18 family. In terms of assembly, part of the 50S ribosomal subunit; part of the 5S rRNA/L5/L18/L25 subcomplex. Contacts the 5S and 23S rRNAs.

Its function is as follows. This is one of the proteins that bind and probably mediate the attachment of the 5S RNA into the large ribosomal subunit, where it forms part of the central protuberance. The chain is Large ribosomal subunit protein uL18 from Methylobacterium radiotolerans (strain ATCC 27329 / DSM 1819 / JCM 2831 / NBRC 15690 / NCIMB 10815 / 0-1).